A 597-amino-acid polypeptide reads, in one-letter code: tRNA uridine 5-carboxymethylaminomethyl modification enzyme MnmG (597 aa).

Position 11-16 (11-16 (GAGHAG)) interacts with FAD. NAD(+) is bound at residue 275–289 (SPRYCPSIEEKIERY).

Belongs to the MnmG family. Homodimer. Heterotetramer of two MnmE and two MnmG subunits. It depends on FAD as a cofactor.

Its subcellular location is the cytoplasm. In terms of biological role, NAD-binding protein involved in the addition of a carboxymethylaminomethyl (cmnm) group at the wobble position (U34) of certain tRNAs, forming tRNA-cmnm(5)s(2)U34. The polypeptide is tRNA uridine 5-carboxymethylaminomethyl modification enzyme MnmG (Endomicrobium trichonymphae).